The following is a 417-amino-acid chain: NADH-quinone oxidoreductase subunit D (417 aa).

Belongs to the complex I 49 kDa subunit family. NDH-1 is composed of 14 different subunits. Subunits NuoB, C, D, E, F, and G constitute the peripheral sector of the complex.

The protein resides in the cell inner membrane. The enzyme catalyses a quinone + NADH + 5 H(+)(in) = a quinol + NAD(+) + 4 H(+)(out). In terms of biological role, NDH-1 shuttles electrons from NADH, via FMN and iron-sulfur (Fe-S) centers, to quinones in the respiratory chain. The immediate electron acceptor for the enzyme in this species is believed to be ubiquinone. Couples the redox reaction to proton translocation (for every two electrons transferred, four hydrogen ions are translocated across the cytoplasmic membrane), and thus conserves the redox energy in a proton gradient. This chain is NADH-quinone oxidoreductase subunit D, found in Alkalilimnicola ehrlichii (strain ATCC BAA-1101 / DSM 17681 / MLHE-1).